The sequence spans 130 residues: Small ribosomal subunit protein uS11c (130 aa).

The protein belongs to the universal ribosomal protein uS11 family. In terms of assembly, part of the 30S ribosomal subunit.

It localises to the plastid. The protein localises to the chloroplast. This is Small ribosomal subunit protein uS11c from Cycas taitungensis (Prince sago).